Reading from the N-terminus, the 798-residue chain is Suppressor of spindle checkpoint defect 1 (798 aa).

The stretch at 339–359 (ESIQQSQVNVDDMCNRIANME) forms a coiled coil.

It belongs to the APC5 family. As to quaternary structure, the APC/C complex is probably composed of at least 12 subunits: apc-2, apc-10, apc-11, cdc-26, emb-1, emb-27, emb-30, mat-1, mat-2, mat-3, such-1 and gfi-3. As to expression, expressed in head neurons, vulval precursor cells and in mature sperm stored in the spermatheca.

It participates in protein modification; protein ubiquitination. Probable component of the anaphase promoting complex/cyclosome (APC/C), a cell cycle-regulated E3 ubiquitin ligase that controls progression through mitosis and the G1 phase of the cell cycle. The APC/C complex acts by mediating ubiquitination and subsequent degradation of target proteins. Required for the metaphase to anaphase transition in meiosis. Plays a role in the segregation of DNA and centrioles during meiosis in male germ cells. The polypeptide is Suppressor of spindle checkpoint defect 1 (Caenorhabditis elegans).